The following is a 490-amino-acid chain: GTPase Der (490 aa).

EngA-type G domains lie at 1 to 165 and 227 to 400; these read MRIA…QIPV and LKVA…TIAT. Residues 7 to 14, 54 to 58, 117 to 120, 233 to 240, 280 to 284, and 345 to 348 each bind GTP; these read GRPNVGKS, DTGGV, NKAD, GHPNVGKS, DTAGL, and NKWD. Residues 401–485 enclose the KH-like domain; that stretch reads TKLSTSLVNK…PFDLEYKAKP (85 aa).

Belongs to the TRAFAC class TrmE-Era-EngA-EngB-Septin-like GTPase superfamily. EngA (Der) GTPase family. As to quaternary structure, associates with the 50S ribosomal subunit.

Functionally, GTPase that plays an essential role in the late steps of ribosome biogenesis. This is GTPase Der from Chlamydia trachomatis serovar L2b (strain UCH-1/proctitis).